A 332-amino-acid polypeptide reads, in one-letter code: Methionine synthase (332 aa).

Zn(2+)-binding residues include histidine 211, cysteine 213, and cysteine 296.

This sequence belongs to the archaeal MetE family. It depends on Zn(2+) as a cofactor.

It functions in the pathway amino-acid biosynthesis; L-methionine biosynthesis via de novo pathway. Its function is as follows. Catalyzes the transfer of a methyl group to L-homocysteine resulting in methionine formation. The physiological methyl donor is unknown. This chain is Methionine synthase, found in Saccharolobus islandicus (strain Y.G.57.14 / Yellowstone #1) (Sulfolobus islandicus).